The following is a 1342-amino-acid chain: DNA-directed RNA polymerase subunit beta (1342 aa).

It belongs to the RNA polymerase beta chain family. As to quaternary structure, the RNAP catalytic core consists of 2 alpha, 1 beta, 1 beta' and 1 omega subunit. When a sigma factor is associated with the core the holoenzyme is formed, which can initiate transcription.

The enzyme catalyses RNA(n) + a ribonucleoside 5'-triphosphate = RNA(n+1) + diphosphate. In terms of biological role, DNA-dependent RNA polymerase catalyzes the transcription of DNA into RNA using the four ribonucleoside triphosphates as substrates. This chain is DNA-directed RNA polymerase subunit beta, found in Pasteurella multocida (strain Pm70).